A 402-amino-acid chain; its full sequence is Serine/threonine transporter SstT (402 aa).

8 helical membrane passes run 17-37, 44-64, 79-99, 138-158, 179-199, 212-232, 295-315, and 336-356; these read IAIG…ITVI, FVGG…ANAL, IVLY…SHYI, ALSQ…GFAM, IVRW…FDTI, VLIL…NPII, MAGA…TLGI, and ASGI…LFGI.

The protein belongs to the dicarboxylate/amino acid:cation symporter (DAACS) (TC 2.A.23) family.

It localises to the cell membrane. It carries out the reaction L-serine(in) + Na(+)(in) = L-serine(out) + Na(+)(out). The catalysed reaction is L-threonine(in) + Na(+)(in) = L-threonine(out) + Na(+)(out). Functionally, involved in the import of serine and threonine into the cell, with the concomitant import of sodium (symport system). The protein is Serine/threonine transporter SstT of Streptococcus thermophilus (strain ATCC BAA-491 / LMD-9).